The sequence spans 128 residues: Small ribosomal subunit protein uS14m (128 aa).

The protein belongs to the universal ribosomal protein uS14 family. As to quaternary structure, component of the mitochondrial ribosome small subunit (28S) which comprises a 12S rRNA and about 30 distinct proteins. Interacts with LIAT1.

It localises to the mitochondrion. The sequence is that of Small ribosomal subunit protein uS14m (Mrps14) from Mus musculus (Mouse).